Reading from the N-terminus, the 558-residue chain is MYREYIQKTIDLLREATGLEDVMITDGGDHADLASTVSFALAKTQRKNPAVIAGELVAVLSAKPEAKGIEISAKGPYINFIFGGDYVAESVHAARREDYGTLPARTDKVIIEHTSANPNGPLHVGHIRNTVIGDTLVRAFRKAGYPVEAQYYLNDMGRQIAIVAWGVQNLHYDRIPGEKGDEYIVRHYVEANKIAKAKPEIEPEFDLLMEKIEAGDPETVKLFHDSVDICADGIKETLSSMNVVHDKFVRETTFLWNGSMQDVLNRIEKLPIVHHEGQMMYLDLSDEGFGNRYVLRRSNGTSVYAARDLAFHLWKNAQCDRSIDVLGADHKLIGAQLQTTLKLIGERPPEIVHFEFVSLPEGSMTTRGGVFITADELIAETKKRAMEEVTVRRPELGEDEREKIAKAVAVGAVRYDIVKVSAEKSTVFDWKEALDFERQSAPYIQYAHARACSIMEKAKAEGGFAECYEYSDPYELALAKHIARFPYVLEKVVCELRPHLLATYVRDLADLFNSFYRFAPVLKAEGNVRDARLTLVDACRNTLYQALGVLGIEALESM.

A 'HIGH' region motif is present at residues 116–126 (ANPNGPLHVGH).

This sequence belongs to the class-I aminoacyl-tRNA synthetase family.

The protein resides in the cytoplasm. The catalysed reaction is tRNA(Arg) + L-arginine + ATP = L-arginyl-tRNA(Arg) + AMP + diphosphate. The protein is Arginine--tRNA ligase of Methanocorpusculum labreanum (strain ATCC 43576 / DSM 4855 / Z).